Here is a 739-residue protein sequence, read N- to C-terminus: Adenosylcobalamin-dependent ribonucleoside-triphosphate reductase (739 aa).

A disulfide bond links Cys-119 and Cys-419. Positions 147–158 (SMPFSFLFDELM) are effector region-1. The tract at residues 168 to 313 (ARSNISQIPR…ICNLIGKAVV (146 aa)) is effector region-2. Catalysis depends on residues Cys-408 and Glu-410. Residues 565-626 (FHYGAYLIQR…NPNFASAGTV (62 aa)) form an adenosylcobalamin-binding-1 region. The segment at 685 to 724 (LQQAPKEPIDKETYEKRSQEITGNVEEVFSQLNSDVKDLE) is adenosylcobalamin-binding-2.

Belongs to the class II ribonucleoside-triphosphate reductase family. As to quaternary structure, monomer. Adenosylcob(III)alamin serves as cofactor.

It carries out the reaction a 2'-deoxyribonucleoside 5'-triphosphate + [thioredoxin]-disulfide + H2O = a ribonucleoside 5'-triphosphate + [thioredoxin]-dithiol. Allosterically regulated by ATP and dNTP. The polypeptide is Adenosylcobalamin-dependent ribonucleoside-triphosphate reductase (rtpR) (Lactobacillus leichmannii).